The following is a 362-amino-acid chain: O-methyltransferase 13 (362 aa).

Serine 181, glycine 205, aspartate 228, aspartate 248, and lysine 262 together coordinate S-adenosyl-L-homocysteine. Aspartate 228 contacts S-adenosyl-L-methionine. Catalysis depends on histidine 266, which acts as the Proton acceptor.

Belongs to the class I-like SAM-binding methyltransferase superfamily. Cation-independent O-methyltransferase family. In terms of assembly, homodimer. Mainly expressed in vascular and cortical tissues.

The catalysed reaction is dopamine + S-adenosyl-L-methionine = 3-methoxytyramine + S-adenosyl-L-homocysteine + H(+). It functions in the pathway aromatic compound metabolism. It participates in alkaloid biosynthesis. In terms of biological role, O-methyltransferase participating in the biosynthesis of natural products derived from phenylethylamine, including mescaline, a natural hallucinogen potentially used in psychotherapeutic treatments. Catalyzes the O-methylation of dopamine and 4,5-dihydroxy-3-methoxyphenethylamine. The polypeptide is O-methyltransferase 13 (Lophophora williamsii (Peyote)).